A 554-amino-acid chain; its full sequence is CTP synthase (554 aa).

The interval methionine 1–leucine 279 is amidoligase domain. Serine 21 contributes to the CTP binding site. Position 21 (serine 21) interacts with UTP. Residues serine 22 to leucine 27 and aspartate 79 contribute to the ATP site. 2 residues coordinate Mg(2+): aspartate 79 and glutamate 153. CTP-binding positions include aspartate 160–glutamate 162, lysine 200–glutamine 205, and lysine 236. Residues lysine 200–glutamine 205 and lysine 236 each bind UTP. Positions threonine 304 to histidine 553 constitute a Glutamine amidotransferase type-1 domain. Glycine 367 lines the L-glutamine pocket. The active-site Nucleophile; for glutamine hydrolysis is the cysteine 394. L-glutamine-binding positions include leucine 395–glutamine 398, glutamate 417, and arginine 478. Active-site residues include histidine 526 and glutamate 528.

This sequence belongs to the CTP synthase family. Homotetramer.

It catalyses the reaction UTP + L-glutamine + ATP + H2O = CTP + L-glutamate + ADP + phosphate + 2 H(+). The catalysed reaction is L-glutamine + H2O = L-glutamate + NH4(+). It carries out the reaction UTP + NH4(+) + ATP = CTP + ADP + phosphate + 2 H(+). It participates in pyrimidine metabolism; CTP biosynthesis via de novo pathway; CTP from UDP: step 2/2. Its activity is regulated as follows. Allosterically activated by GTP, when glutamine is the substrate; GTP has no effect on the reaction when ammonia is the substrate. The allosteric effector GTP functions by stabilizing the protein conformation that binds the tetrahedral intermediate(s) formed during glutamine hydrolysis. Inhibited by the product CTP, via allosteric rather than competitive inhibition. Its function is as follows. Catalyzes the ATP-dependent amination of UTP to CTP with either L-glutamine or ammonia as the source of nitrogen. Regulates intracellular CTP levels through interactions with the four ribonucleotide triphosphates. In Corynebacterium glutamicum (strain R), this protein is CTP synthase.